Consider the following 842-residue polypeptide: Probable receptor-like protein kinase At5g61350 (842 aa).

A signal peptide spans 1 to 27 (MGGDFRHFSSHVSLLLLFLLIVKSSSS). Residues 28-425 (FTPADNYLID…IGGMSSKKLA (398 aa)) lie on the Extracellular side of the membrane. N-linked (GlcNAc...) asparagine glycosylation is found at Asn81, Asn125, Asn252, Asn294, Asn359, and Asn365. A helical transmembrane segment spans residues 426–446 (IAGIGFVMALTAFLGVVVLLV). Residues 447–842 (RWQRRPKDWQ…EMQSPSHSIP (396 aa)) are Cytoplasmic-facing. The Protein kinase domain maps to 525 to 803 (FDENAVCGVG…GDVLWNLEYA (279 aa)). ATP contacts are provided by residues 531-539 (CGVGGFGKV) and Lys553. Asp655 (proton acceptor) is an active-site residue.

It belongs to the protein kinase superfamily. Ser/Thr protein kinase family.

The protein resides in the membrane. This chain is Probable receptor-like protein kinase At5g61350, found in Arabidopsis thaliana (Mouse-ear cress).